Consider the following 629-residue polypeptide: Putative polypeptide N-acetylgalactosaminyltransferase 10 (629 aa).

Residues methionine 1–histidine 12 lie on the Cytoplasmic side of the membrane. The helical; Signal-anchor for type II membrane protein transmembrane segment at tryptophan 13–valine 33 threads the bilayer. Residues serine 34–glutamate 629 are Lumenal-facing. N-linked (GlcNAc...) asparagine glycosylation is found at asparagine 143 and asparagine 177. 5 disulfide bridges follow: cysteine 154–cysteine 385, cysteine 376–cysteine 454, cysteine 493–cysteine 510, cysteine 539–cysteine 556, and cysteine 582–cysteine 598. The interval leucine 163–proline 275 is catalytic subdomain A. Substrate-binding residues include aspartate 204 and arginine 236. 2 residues coordinate Mn(2+): aspartate 259 and histidine 261. The interval proline 331–arginine 393 is catalytic subdomain B. Substrate is bound at residue tryptophan 362. Residue histidine 390 participates in Mn(2+) binding. Substrate is bound at residue arginine 393. The interval arginine 393–aspartate 406 is flexible loop. The Ricin B-type lectin domain maps to threonine 526–glutamate 629.

Belongs to the glycosyltransferase 2 family. GalNAc-T subfamily. Requires Mn(2+) as cofactor.

It localises to the golgi apparatus membrane. The catalysed reaction is L-seryl-[protein] + UDP-N-acetyl-alpha-D-galactosamine = a 3-O-[N-acetyl-alpha-D-galactosaminyl]-L-seryl-[protein] + UDP + H(+). The enzyme catalyses L-threonyl-[protein] + UDP-N-acetyl-alpha-D-galactosamine = a 3-O-[N-acetyl-alpha-D-galactosaminyl]-L-threonyl-[protein] + UDP + H(+). Its pathway is protein modification; protein glycosylation. Functionally, may catalyze the initial reaction in O-linked oligosaccharide biosynthesis, the transfer of an N-acetyl-D-galactosamine residue to a serine or threonine residue on the protein receptor. This Caenorhabditis briggsae protein is Putative polypeptide N-acetylgalactosaminyltransferase 10.